The primary structure comprises 99 residues: Transposase InsE for insertion sequence IS3A (99 aa).

The interval 1–21 (MTKTVSTSKKPRKQHSPEFRS) is disordered.

The protein belongs to the transposase 8 family.

Its function is as follows. Involved in the transposition of the insertion sequence IS3. In Escherichia coli (strain K12), this protein is Transposase InsE for insertion sequence IS3A (insE1).